A 192-amino-acid polypeptide reads, in one-letter code: Pyridoxal 5'-phosphate synthase subunit PdxT (192 aa).

50-52 (GES) provides a ligand contact to L-glutamine. The active-site Nucleophile is the Cys-82. L-glutamine is bound by residues Arg-109 and 136-137 (IR). Active-site charge relay system residues include His-172 and Glu-174.

It belongs to the glutaminase PdxT/SNO family. In the presence of PdxS, forms a dodecamer of heterodimers. Only shows activity in the heterodimer.

It catalyses the reaction aldehydo-D-ribose 5-phosphate + D-glyceraldehyde 3-phosphate + L-glutamine = pyridoxal 5'-phosphate + L-glutamate + phosphate + 3 H2O + H(+). It carries out the reaction L-glutamine + H2O = L-glutamate + NH4(+). It functions in the pathway cofactor biosynthesis; pyridoxal 5'-phosphate biosynthesis. Catalyzes the hydrolysis of glutamine to glutamate and ammonia as part of the biosynthesis of pyridoxal 5'-phosphate. The resulting ammonia molecule is channeled to the active site of PdxS. The protein is Pyridoxal 5'-phosphate synthase subunit PdxT of Haemophilus influenzae (strain PittGG).